The following is a 102-amino-acid chain: RNA-binding protein Hfq (102 aa).

A Sm domain is found at 9-68; the sequence is DPFLNALRRERVPVSIYLVNGIKLQGQIESFDQFVILLKNTVSQMVYKHAISTVVPSRPV. Residues 63–102 form a disordered region; it reads VPSRPVSHHSNNAGGGSNNYHHSNNAQPSSAASQDSEDAE. Residues 70–96 are compositionally biased toward low complexity; it reads HHSNNAGGGSNNYHHSNNAQPSSAASQ.

The protein belongs to the Hfq family. Homohexamer.

Functionally, RNA chaperone that binds small regulatory RNA (sRNAs) and mRNAs to facilitate mRNA translational regulation in response to envelope stress, environmental stress and changes in metabolite concentrations. Also binds with high specificity to tRNAs. This is RNA-binding protein Hfq from Cronobacter sakazakii (strain ATCC BAA-894) (Enterobacter sakazakii).